Consider the following 556-residue polypeptide: Formate--tetrahydrofolate ligase 1 (556 aa).

65–72 (TPAGEGKT) is a binding site for ATP.

This sequence belongs to the formate--tetrahydrofolate ligase family.

It catalyses the reaction (6S)-5,6,7,8-tetrahydrofolate + formate + ATP = (6R)-10-formyltetrahydrofolate + ADP + phosphate. It participates in one-carbon metabolism; tetrahydrofolate interconversion. The chain is Formate--tetrahydrofolate ligase 1 from Desulfitobacterium hafniense (strain Y51).